Consider the following 496-residue polypeptide: L-arabinose isomerase (496 aa).

Mn(2+)-binding residues include Glu-305, Glu-330, His-347, and His-446.

It belongs to the arabinose isomerase family. Mn(2+) is required as a cofactor.

It carries out the reaction beta-L-arabinopyranose = L-ribulose. Its pathway is carbohydrate degradation; L-arabinose degradation via L-ribulose; D-xylulose 5-phosphate from L-arabinose (bacterial route): step 1/3. Catalyzes the conversion of L-arabinose to L-ribulose. The protein is L-arabinose isomerase of Bacillus subtilis (strain 168).